The primary structure comprises 256 residues: 2-C-methyl-D-erythritol 4-phosphate cytidylyltransferase (256 aa).

It belongs to the IspD/TarI cytidylyltransferase family. IspD subfamily.

It catalyses the reaction 2-C-methyl-D-erythritol 4-phosphate + CTP + H(+) = 4-CDP-2-C-methyl-D-erythritol + diphosphate. It participates in isoprenoid biosynthesis; isopentenyl diphosphate biosynthesis via DXP pathway; isopentenyl diphosphate from 1-deoxy-D-xylulose 5-phosphate: step 2/6. Functionally, catalyzes the formation of 4-diphosphocytidyl-2-C-methyl-D-erythritol from CTP and 2-C-methyl-D-erythritol 4-phosphate (MEP). This is 2-C-methyl-D-erythritol 4-phosphate cytidylyltransferase from Corynebacterium glutamicum (strain ATCC 13032 / DSM 20300 / JCM 1318 / BCRC 11384 / CCUG 27702 / LMG 3730 / NBRC 12168 / NCIMB 10025 / NRRL B-2784 / 534).